The sequence spans 425 residues: uncharacterized protein (425 aa).

The TRAM domain occupies 1–57 (MKDKPLKLTVEKLVYGGYGFSRLNGKAVFVRFASPKELVEAKVVKEKKDYTEAVVTK). The [4Fe-4S] cluster site is built by cysteine 70, cysteine 76, cysteine 79, and cysteine 153. Glutamine 260, aspartate 308, and aspartate 354 together coordinate S-adenosyl-L-methionine. The active-site Nucleophile is the cysteine 381.

The protein belongs to the class I-like SAM-binding methyltransferase superfamily. RNA M5U methyltransferase family.

This is an uncharacterized protein from Aquifex aeolicus (strain VF5).